Here is a 351-residue protein sequence, read N- to C-terminus: Phosphoribosylformylglycinamidine cyclo-ligase (351 aa).

The protein belongs to the AIR synthase family.

It is found in the cytoplasm. It catalyses the reaction 2-formamido-N(1)-(5-O-phospho-beta-D-ribosyl)acetamidine + ATP = 5-amino-1-(5-phospho-beta-D-ribosyl)imidazole + ADP + phosphate + H(+). Its pathway is purine metabolism; IMP biosynthesis via de novo pathway; 5-amino-1-(5-phospho-D-ribosyl)imidazole from N(2)-formyl-N(1)-(5-phospho-D-ribosyl)glycinamide: step 2/2. In Burkholderia cenocepacia (strain ATCC BAA-245 / DSM 16553 / LMG 16656 / NCTC 13227 / J2315 / CF5610) (Burkholderia cepacia (strain J2315)), this protein is Phosphoribosylformylglycinamidine cyclo-ligase.